The chain runs to 370 residues: Vasopressin V2 receptor (370 aa).

The segment covering methionine 1–valine 10 has biased composition (polar residues). The segment at methionine 1 to glutamate 26 is disordered. Residues methionine 1–glutamine 37 are Extracellular-facing. Asparagine 22 carries N-linked (GlcNAc...) asparagine glycosylation. A helical membrane pass occupies residues alanine 38–alanine 62. Residues arginine 63–phenylalanine 76 lie on the Cytoplasmic side of the membrane. The helical transmembrane segment at isoleucine 77 to alanine 97 threads the bilayer. The Extracellular segment spans residues tryptophan 98–arginine 112. Residues alanine 113–leucine 134 form a helical membrane-spanning segment. Over aspartate 135–proline 158 the chain is Cytoplasmic. A helical transmembrane segment spans residues valine 159 to glutamine 179. Topologically, residues arginine 180 to tryptophan 199 are extracellular. Residues glycine 200–glycine 219 traverse the membrane as a helical segment. The Cytoplasmic segment spans residues isoleucine 220–arginine 270. The chain crosses the membrane as a helical span at residues methionine 271–tryptophan 292. At alanine 293–valine 307 the chain is on the extracellular side. The chain crosses the membrane as a helical span at residues leucine 308–phenylalanine 327. Topologically, residues serine 328 to serine 370 are cytoplasmic. A lipid anchor (S-palmitoyl cysteine) is attached at cysteine 340.

Belongs to the G-protein coupled receptor 1 family. Vasopressin/oxytocin receptor subfamily. As to quaternary structure, interacts with ARRDC4. Identified in a complex containing at least ARRDC4, V2R and HGS. Interacts with TMEM147.

It is found in the cell membrane. Receptor for arginine vasopressin. The activity of this receptor is mediated by G proteins which activate adenylate cyclase. Involved in renal water reabsorption. The chain is Vasopressin V2 receptor (AVPR2) from Canis lupus familiaris (Dog).